The following is a 988-amino-acid chain: Bifunctional glutamine synthetase adenylyltransferase/adenylyl-removing enzyme (988 aa).

The interval M1–T472 is adenylyl removase. An adenylyl transferase region spans residues G476–G988.

Belongs to the GlnE family. The cofactor is Mg(2+).

The enzyme catalyses [glutamine synthetase]-O(4)-(5'-adenylyl)-L-tyrosine + phosphate = [glutamine synthetase]-L-tyrosine + ADP. The catalysed reaction is [glutamine synthetase]-L-tyrosine + ATP = [glutamine synthetase]-O(4)-(5'-adenylyl)-L-tyrosine + diphosphate. Its function is as follows. Involved in the regulation of glutamine synthetase GlnA, a key enzyme in the process to assimilate ammonia. When cellular nitrogen levels are high, the C-terminal adenylyl transferase (AT) inactivates GlnA by covalent transfer of an adenylyl group from ATP to specific tyrosine residue of GlnA, thus reducing its activity. Conversely, when nitrogen levels are low, the N-terminal adenylyl removase (AR) activates GlnA by removing the adenylyl group by phosphorolysis, increasing its activity. The regulatory region of GlnE binds the signal transduction protein PII (GlnB) which indicates the nitrogen status of the cell. The polypeptide is Bifunctional glutamine synthetase adenylyltransferase/adenylyl-removing enzyme (Agrobacterium fabrum (strain C58 / ATCC 33970) (Agrobacterium tumefaciens (strain C58))).